A 92-amino-acid chain; its full sequence is C-C motif chemokine 3 (92 aa).

An N-terminal signal peptide occupies residues 1-19; the sequence is MKVPGAALAVLLCTMSLCS. 2 cysteine pairs are disulfide-bonded: C33/C57 and C34/C73.

The protein belongs to the intercrine beta (chemokine CC) family. In terms of assembly, self-associates. Also heterodimer of MIP-1-alpha(4-69) and MIP-1-beta(3-69). Interacts with CCR1.

It is found in the secreted. Functionally, monokine with inflammatory and chemokinetic properties. Binds to CCR1, CCR4 and CCR5. One of the major HIV-suppressive factors produced by CD8+ T-cells. Recombinant MIP-1-alpha induces a dose-dependent inhibition of different strains of HIV-1, HIV-2, and simian immunodeficiency virus (SIV). The protein is C-C motif chemokine 3 (CCL3) of Canis lupus familiaris (Dog).